The following is a 76-amino-acid chain: Small ribosomal subunit protein bS18 (76 aa).

It belongs to the bacterial ribosomal protein bS18 family. Part of the 30S ribosomal subunit. Forms a tight heterodimer with protein bS6.

Binds as a heterodimer with protein bS6 to the central domain of the 16S rRNA, where it helps stabilize the platform of the 30S subunit. This is Small ribosomal subunit protein bS18 from Marinobacter nauticus (strain ATCC 700491 / DSM 11845 / VT8) (Marinobacter aquaeolei).